The primary structure comprises 393 residues: METFLFTSESVNEGHPDKLCDQVSDAVLDACLAQDPDSKVACETCTRTNMVMVFGEITTKANVDYEQIVRDTCRSIGFTSDDVGLDADNCKVLVNIEQQSPDIAQGVHGHLTKKPEEIGAGDQGHMFGYATDETPELMPLSHVLATKLGARLTEVRKNGTCAWLRPDGKTQVTVEYYNGNGAMVPVRVHTVLISTQHDETVTNDEIAADLKQHVIKPVIPEKYLDEKTIFHLNPSGRFVIGGPHGDAGLTGRKIIIDTYGGWGAHGGGAFSGKDPTKVDRSGAYIVRQAAKSIVASGLARRCIVQVSYAIGVPEPLSVFVDSYGTGKIPDREILKIVKENFDFRPGMISVNLDLKRGGNGRFLKTAAYGHFGREDPDFTWEVVKPLKWDKVQA.

Glu9 contacts Mg(2+). His15 is an ATP binding site. Glu43 contacts K(+). L-methionine-binding residues include Glu56 and Gln99. Residues 167-169 (DGK), 235-238 (SGRF), Asp246, 252-253 (RK), Ala269, Lys273, and Lys277 each bind ATP. Asp246 contributes to the L-methionine binding site. Position 277 (Lys277) interacts with L-methionine.

The protein belongs to the AdoMet synthase family. As to quaternary structure, homotetramer. The cofactor is Mn(2+). Mg(2+) is required as a cofactor. It depends on Co(2+) as a cofactor. Requires K(+) as cofactor.

The protein resides in the cytoplasm. The catalysed reaction is L-methionine + ATP + H2O = S-adenosyl-L-methionine + phosphate + diphosphate. The protein operates within amino-acid biosynthesis; S-adenosyl-L-methionine biosynthesis; S-adenosyl-L-methionine from L-methionine: step 1/1. Functionally, catalyzes the formation of S-adenosylmethionine from methionine and ATP. The reaction comprises two steps that are both catalyzed by the same enzyme: formation of S-adenosylmethionine (AdoMet) and triphosphate, and subsequent hydrolysis of the triphosphate. The polypeptide is S-adenosylmethionine synthase (SAMS) (Litchi chinensis (Lychee)).